The following is a 449-amino-acid chain: Probable glycine dehydrogenase (decarboxylating) subunit 1 (449 aa).

This sequence belongs to the GcvP family. N-terminal subunit subfamily. As to quaternary structure, the glycine cleavage system is composed of four proteins: P, T, L and H. In this organism, the P 'protein' is a heterodimer of two subunits.

The enzyme catalyses N(6)-[(R)-lipoyl]-L-lysyl-[glycine-cleavage complex H protein] + glycine + H(+) = N(6)-[(R)-S(8)-aminomethyldihydrolipoyl]-L-lysyl-[glycine-cleavage complex H protein] + CO2. Its function is as follows. The glycine cleavage system catalyzes the degradation of glycine. The P protein binds the alpha-amino group of glycine through its pyridoxal phosphate cofactor; CO(2) is released and the remaining methylamine moiety is then transferred to the lipoamide cofactor of the H protein. This chain is Probable glycine dehydrogenase (decarboxylating) subunit 1, found in Sulfurisphaera tokodaii (strain DSM 16993 / JCM 10545 / NBRC 100140 / 7) (Sulfolobus tokodaii).